A 492-amino-acid chain; its full sequence is GTPase Der (492 aa).

2 EngA-type G domains span residues 3–166 (PVVA…VDEV) and 205–378 (IKLA…DSAT). GTP-binding positions include 9 to 16 (GRPNVGKS), 56 to 60 (DTGGI), 118 to 121 (NKTD), 211 to 218 (GRPNVGKS), 258 to 262 (DTAGV), and 323 to 326 (NKWD). Positions 379–463 (RRVSTAMLTR…PIRIQFKEGE (85 aa)) constitute a KH-like domain.

Belongs to the TRAFAC class TrmE-Era-EngA-EngB-Septin-like GTPase superfamily. EngA (Der) GTPase family. In terms of assembly, associates with the 50S ribosomal subunit.

In terms of biological role, GTPase that plays an essential role in the late steps of ribosome biogenesis. In Klebsiella pneumoniae subsp. pneumoniae (strain ATCC 700721 / MGH 78578), this protein is GTPase Der.